The chain runs to 396 residues: Pinosylvin synthase 2 (396 aa).

60 to 63 (KFKR) provides a ligand contact to substrate. Cys-170 is an active-site residue. Residues Leu-273 and 311–313 (GGR) each bind substrate.

Belongs to the thiolase-like superfamily. Chalcone/stilbene synthases family. As to quaternary structure, homodimer.

The protein resides in the cytoplasm. The enzyme catalyses (E)-cinnamoyl-CoA + 3 malonyl-CoA + 3 H(+) = (E)-pinosylvin + 4 CO2 + 4 CoA. The catalysed reaction is 3-phenylpropanoyl-CoA + 3 malonyl-CoA + 3 H(+) = dihydropinosylvin + 4 CO2 + 4 CoA. Its pathway is phytoalexin biosynthesis; pinosylvin biosynthesis. In terms of biological role, catalyzes the production of pinosylvin from cinnamoyl-CoA and malonyl-CoA, and dihydropinosylvin from dihydrocinnamoyl-CoA. The protein is Pinosylvin synthase 2 of Pinus strobus (Eastern white pine).